Consider the following 843-residue polypeptide: Protein P (843 aa).

The tract at residues 1–177 (MPLSYQHFRK…FCGSPYSWEQ (177 aa)) is terminal protein domain (TP). The segment at 178 to 346 (DLQHGRLVFQ…YCLCHIVNLI (169 aa)) is spacer. 2 disordered regions span residues 220–269 (KSRL…HNCA) and 291–316 (TSKG…RSRS). The interval 347–690 (EDWGPCTEHG…YLNLYPVARQ (344 aa)) is polymerase/reverse transcriptase domain (RT). The Reverse transcriptase domain occupies 357–600 (EHRIRTPRTP…YSLNFMGYVI (244 aa)). Mg(2+) is bound by residues Asp429, Asp551, and Asp552.

This sequence belongs to the hepadnaviridae P protein family.

The catalysed reaction is DNA(n) + a 2'-deoxyribonucleoside 5'-triphosphate = DNA(n+1) + diphosphate. It carries out the reaction Endonucleolytic cleavage to 5'-phosphomonoester.. Its activity is regulated as follows. Activated by host HSP70 and HSP40 in vitro to be able to bind the epsilon loop of the pgRNA. Because deletion of the RNase H region renders the protein partly chaperone-independent, the chaperones may be needed indirectly to relieve occlusion of the RNA-binding site by this domain. Inhibited by several reverse-transcriptase inhibitors: Lamivudine, Adefovir and Entecavir. In terms of biological role, multifunctional enzyme that converts the viral RNA genome into dsDNA in viral cytoplasmic capsids. This enzyme displays a DNA polymerase activity that can copy either DNA or RNA templates, and a ribonuclease H (RNase H) activity that cleaves the RNA strand of RNA-DNA heteroduplexes in a partially processive 3'- to 5'-endonucleasic mode. Neo-synthesized pregenomic RNA (pgRNA) are encapsidated together with the P protein, and reverse-transcribed inside the nucleocapsid. Initiation of reverse-transcription occurs first by binding the epsilon loop on the pgRNA genome, and is initiated by protein priming, thereby the 5'-end of (-)DNA is covalently linked to P protein. Partial (+)DNA is synthesized from the (-)DNA template and generates the relaxed circular DNA (RC-DNA) genome. After budding and infection, the RC-DNA migrates in the nucleus, and is converted into a plasmid-like covalently closed circular DNA (cccDNA). The activity of P protein does not seem to be necessary for cccDNA generation, and is presumably released from (+)DNA by host nuclear DNA repair machinery. The protein is Protein P of Homo sapiens (Human).